A 144-amino-acid chain; its full sequence is Cell division protein SepF (144 aa).

Residues 21 to 38 (TDLQGTKTTDEVSPTSRP) show a composition bias toward polar residues. The tract at residues 21–40 (TDLQGTKTTDEVSPTSRPDN) is disordered.

The protein belongs to the SepF family. Homodimer. Interacts with FtsZ.

It is found in the cytoplasm. Functionally, cell division protein that is part of the divisome complex and is recruited early to the Z-ring. Probably stimulates Z-ring formation, perhaps through the cross-linking of FtsZ protofilaments. Its function overlaps with FtsA. The polypeptide is Cell division protein SepF (Latilactobacillus sakei subsp. sakei (strain 23K) (Lactobacillus sakei subsp. sakei)).